Consider the following 1663-residue polypeptide: Cortactin-binding protein 2 (1663 aa).

Disordered regions lie at residues 1 to 23 (MATDGASCEPDLSRAPEDAAGAA), 203 to 222 (KKKTNELEEELSAEKRRSTE), 367 to 440 (GASV…LHPG), 454 to 478 (GNANDPDQNGNTTQSPPSRDVSPTS), and 498 to 616 (RFTS…PKPS). Residues 119–276 (KKMQERMSAQ…EQLKRGSDSK (158 aa)) are a coiled coil. Over residues 386 to 396 (PSTGSTPDPTS) the composition is skewed to low complexity. An Asymmetric dimethylarginine modification is found at arginine 498. Positions 583-593 (TVASTPSSLPQ) are enriched in polar residues. ANK repeat units follow at residues 709-739 (GRPTLLQQAAAQGNVTLLSMLLNEEGLDINY), 743-772 (DGHSALYSAAKNGHTDCVRLLLSAEAQVNA), 776-805 (NGFTPLCAAAAQGHFECVELLISYDANINH), 809-838 (GGQTPLYLACKNGNKECIKLLLEAGTNRSV), 842-871 (DGWTPVHAAVDTGNVDSLKLLMYHRIPAHG), and 912-942 (EGWTAAHIAASKGFKNCLEILCRHGGLEPER). The tract at residues 1449–1482 (KGESGAWRKVNTSPRRKSGRFSLPTWNKPDLSTE) is disordered. The residue at position 1524 (serine 1524) is a Phosphoserine. The disordered stretch occupies residues 1581-1663 (QKEVSPLSSH…KNEHLEKPNK (83 aa)). The span at 1582–1599 (KEVSPLSSHQTTECSNSK) shows a compositional bias: polar residues. Residues 1624 to 1638 (SQNTKRSSSSSNTRQ) are compositionally biased toward low complexity. The segment covering 1639 to 1648 (IEINNNSKEV) has biased composition (polar residues). The span at 1653–1663 (HKNEHLEKPNK) shows a compositional bias: basic and acidic residues.

As to quaternary structure, interacts with CTTN/cortactin SH3 domain. Interacts with STRN, STRN4/zinedin and MOB4/phocein; this interactions mediate the association with the STRIPAK core complex and may regulate dendritic spine distribution of the STRIPAK complex in hippocampal neurons. Activation of glutamate receptors weakens the interaction with STRN and STRN4. As to expression, highest expression in brain. Also expressed in kidney, pancreas, lung, heart, liver, skeletal muscle and placenta.

It localises to the cytoplasm. The protein localises to the cell cortex. It is found in the cell projection. Its subcellular location is the dendritic spine. Functionally, regulates the dendritic spine distribution of CTTN/cortactin in hippocampal neurons, and thus controls dendritic spinogenesis and dendritic spine maintenance. Associates with the striatin-interacting phosphatase and kinase (STRIPAK) core complex to regulate dendritic spine distribution of the STRIPAK complex in hippocampal neurons. This chain is Cortactin-binding protein 2, found in Homo sapiens (Human).